The sequence spans 481 residues: Aspartyl/glutamyl-tRNA(Asn/Gln) amidotransferase subunit B (481 aa).

It belongs to the GatB/GatE family. GatB subfamily. In terms of assembly, heterotrimer of A, B and C subunits.

The enzyme catalyses L-glutamyl-tRNA(Gln) + L-glutamine + ATP + H2O = L-glutaminyl-tRNA(Gln) + L-glutamate + ADP + phosphate + H(+). The catalysed reaction is L-aspartyl-tRNA(Asn) + L-glutamine + ATP + H2O = L-asparaginyl-tRNA(Asn) + L-glutamate + ADP + phosphate + 2 H(+). Functionally, allows the formation of correctly charged Asn-tRNA(Asn) or Gln-tRNA(Gln) through the transamidation of misacylated Asp-tRNA(Asn) or Glu-tRNA(Gln) in organisms which lack either or both of asparaginyl-tRNA or glutaminyl-tRNA synthetases. The reaction takes place in the presence of glutamine and ATP through an activated phospho-Asp-tRNA(Asn) or phospho-Glu-tRNA(Gln). This is Aspartyl/glutamyl-tRNA(Asn/Gln) amidotransferase subunit B from Pseudomonas fluorescens (strain Pf0-1).